The chain runs to 249 residues: DNA polymerase sliding clamp (249 aa).

This sequence belongs to the PCNA family. In terms of assembly, homotrimer. The subunits circularize to form a toroid; DNA passes through its center. Replication factor C (RFC) is required to load the toroid on the DNA.

Sliding clamp subunit that acts as a moving platform for DNA processing. Responsible for tethering the catalytic subunit of DNA polymerase and other proteins to DNA during high-speed replication. The protein is DNA polymerase sliding clamp of Methanococcus vannielii (strain ATCC 35089 / DSM 1224 / JCM 13029 / OCM 148 / SB).